The sequence spans 73 residues: DNA gyrase inhibitor YacG (73 aa).

Zn(2+) contacts are provided by C12, C15, C31, and C35. Positions 47–73 (DYAIPGEPIDPAEPSEDRNGAEGPPTD) are disordered.

It belongs to the DNA gyrase inhibitor YacG family. In terms of assembly, interacts with GyrB. The cofactor is Zn(2+).

Inhibits all the catalytic activities of DNA gyrase by preventing its interaction with DNA. Acts by binding directly to the C-terminal domain of GyrB, which probably disrupts DNA binding by the gyrase. The chain is DNA gyrase inhibitor YacG from Methylococcus capsulatus (strain ATCC 33009 / NCIMB 11132 / Bath).